The primary structure comprises 175 residues: Large ribosomal subunit protein uL10 (175 aa).

This sequence belongs to the universal ribosomal protein uL10 family. Part of the ribosomal stalk of the 50S ribosomal subunit. The N-terminus interacts with L11 and the large rRNA to form the base of the stalk. The C-terminus forms an elongated spine to which L12 dimers bind in a sequential fashion forming a multimeric L10(L12)X complex.

Its function is as follows. Forms part of the ribosomal stalk, playing a central role in the interaction of the ribosome with GTP-bound translation factors. The polypeptide is Large ribosomal subunit protein uL10 (Alkalilimnicola ehrlichii (strain ATCC BAA-1101 / DSM 17681 / MLHE-1)).